Consider the following 122-residue polypeptide: Basic phospholipase A2 CbII (122 aa).

7 disulfides stabilise this stretch: C26–C115, C28–C44, C43–C95, C49–C122, C50–C88, C57–C81, and C75–C86. Ca(2+) contacts are provided by Y27, G29, and G31. H47 is a catalytic residue. D48 is a binding site for Ca(2+). Residue D89 is part of the active site.

This sequence belongs to the phospholipase A2 family. Group I subfamily. D49 sub-subfamily. In terms of assembly, heterodimer of an acidic subunit (CbIalpha or CbIbeta) and a basic subunit (CbII). The acidic subunit is non-toxic, and increases the toxicity of the basic subunit. Ca(2+) serves as cofactor. In terms of tissue distribution, expressed by the venom gland.

The protein resides in the secreted. It catalyses the reaction a 1,2-diacyl-sn-glycero-3-phosphocholine + H2O = a 1-acyl-sn-glycero-3-phosphocholine + a fatty acid + H(+). Its function is as follows. Heterodimer: presynaptic neurotoxin. Functionally, monomer: Snake venom phospholipase A2 (PLA2) that exhibits strong anticoagulant effects by binding to factor Xa (F10) and inhibiting the prothrombinase activity (IC(50) is 20 nM). PLA2 catalyzes the calcium-dependent hydrolysis of the 2-acyl groups in 3-sn-phosphoglycerides. The polypeptide is Basic phospholipase A2 CbII (Pseudocerastes fieldi (Field's horned viper)).